Reading from the N-terminus, the 91-residue chain is Conotoxin Im9.1 (91 aa).

The signal sequence occupies residues 1–23; the sequence is MSKVGVVPLIFLVLLSIAALQNG. Positions 24–55 are excised as a propeptide; that stretch reads DDPRRQRDEKQSPQGDILRSTLTKYSYNIQRR. 3 cysteine pairs are disulfide-bonded: cysteine 56–cysteine 72, cysteine 63–cysteine 83, and cysteine 66–cysteine 86.

Belongs to the conotoxin M superfamily. As to expression, expressed by the venom duct.

Its subcellular location is the secreted. Probable neurotoxin. The chain is Conotoxin Im9.1 from Conus imperialis (Imperial cone).